We begin with the raw amino-acid sequence, 262 residues long: MHRLVVLLVCLAVGSACAGTVGVSNGDPFEREGRIVGGEDTTIGAHPYQVSLQTKSGSHFCGGSLINEDTVVTAAHCLVGRKVSKVFVRLGSTLYNEGGIVVAVRELAYNEDYNSKTMEYDVGILKLDEKVKETENIRYIELATETPPTGTTAVVTGWGSKCYFWCMTLPKTLQEVYVNIVDWKTCASDEYKYGEIIYDSMVCAYEKKKDACQGDSGGPLAVGNTLVGIVSWGYACASNLLPGVYSDVPALRKWILNASETL.

The N-terminal stretch at Met-1–Gly-19 is a signal peptide. A propeptide spans Thr-20 to Arg-34 (activation peptide). The region spanning Ile-35–Glu-260 is the Peptidase S1 domain. Cys-61 and Cys-77 are oxidised to a cystine. Catalysis depends on charge relay system residues His-76 and Asp-121. 2 disulfide bridges follow: Cys-186-Cys-203 and Cys-212-Cys-236. The Charge relay system role is filled by Ser-216.

Belongs to the peptidase S1 family.

Its subcellular location is the secreted. It is found in the extracellular space. It carries out the reaction Preferential cleavage: Arg-|-Xaa, Lys-|-Xaa.. The chain is Trypsin theta (thetaTry) from Drosophila melanogaster (Fruit fly).